A 170-amino-acid chain; its full sequence is MIIERLVGNLRDLNPLDFSVDYVDLEWFETRKKIARFKTRQGKDIAIRLKDAPKLGLSQGDILFKEEKEIIAVNILDSEVIHIQAKSVAEVAKICYEIGNRHAALYYGESQFEFKTPFEKPTLALLEKLGVQNRVLSSKLDSKERLTVSMPHSEPNFKVSLASDFKVVMK.

This sequence belongs to the UreE family.

Its subcellular location is the cytoplasm. Involved in urease metallocenter assembly. Binds nickel. Probably functions as a nickel donor during metallocenter assembly. This is Urease accessory protein UreE from Helicobacter pylori (strain G27).